The primary structure comprises 334 residues: Testis-specific Y-encoded protein 1 (334 aa).

A Phosphoserine modification is found at Ser-4. Disordered stretches follow at residues 27–46 and 96–146; these read LEGEPSVQAPEQSPGAPAGD and NEGE…AERR. 2 stretches are compositionally biased toward basic and acidic residues: residues 96–108 and 115–128; these read NEGEEVKDQKQEG and ELEKNPEQACDSKD.

It belongs to the nucleosome assembly protein (NAP) family. In terms of processing, phosphorylated. As to expression, testis.

It is found in the cytoplasm. It localises to the nucleus. Functionally, may be involved in sperm differentiation and proliferation. This chain is Testis-specific Y-encoded protein 1 (Tspy1), found in Rattus norvegicus (Rat).